Consider the following 378-residue polypeptide: DNA replication and repair protein RecF (378 aa).

31-38 (GENGSGKT) serves as a coordination point for ATP.

This sequence belongs to the RecF family.

It is found in the cytoplasm. In terms of biological role, the RecF protein is involved in DNA metabolism; it is required for DNA replication and normal SOS inducibility. RecF binds preferentially to single-stranded, linear DNA. It also seems to bind ATP. This Teredinibacter turnerae (strain ATCC 39867 / T7901) protein is DNA replication and repair protein RecF.